A 255-amino-acid chain; its full sequence is Homeobox protein DLX-1 (255 aa).

Positions 1–14 (MTMTTMPESLNSPV) are enriched in polar residues. 2 disordered regions span residues 1–38 (MTMTTMPESLNSPVSGKAVFMEFGPPNQQMSPSPMSHG) and 95–118 (SLAQSRLEDPGADSEKSTVVEGGE). Low complexity predominate over residues 25-36 (PPNQQMSPSPMS). Residues 100-112 (RLEDPGADSEKST) are compositionally biased toward basic and acidic residues. The segment at residues 128–187 (IRKPRTIYSSLQLQALNRRFQQTQYLALPERAELAASLGLTQTQVKIWFQNKRSKFKKLM) is a DNA-binding region (homeobox). The disordered stretch occupies residues 204-233 (ALSAGSPPVPPGWNPNSSSGKGSGSSAGSY). Low complexity predominate over residues 217–232 (NPNSSSGKGSGSSAGS).

Belongs to the distal-less homeobox family. Interacts with SMAD4 (via homeobox DNA-binding domain). Interacts (via homeobox DNA-binding domain) with POU4F2; this interaction suppresses DLX1-mediated transcriptional activity in postnatal retina and enhances retinal ganglion cell (RGC) differentiation. Expressed in a restricted region of the developing brain, within the diencephalon and the adjacent telencephalic regions.

Its subcellular location is the nucleus. Plays a role as a transcriptional activator or repressor. Inhibits several cytokine signaling pathways, such as TGFB1, activin-A/INHBA and BMP4 by interfering with the transcriptional stimulatory activity of transcription factors, such as MSX2, FAST2, SMAD2 and SMAD3 during hematopoietic cell differentiation. Plays a role in terminal differentiation of interneurons, such as amacrine and bipolar cells in the developing retina. Likely to play a regulatory role in the development of the ventral forebrain. May play a role in craniofacial patterning and morphogenesis and may be involved in the early development of diencephalic subdivisions. The chain is Homeobox protein DLX-1 (Dlx1) from Mus musculus (Mouse).